The chain runs to 95 residues: Alpha-conotoxin-like Ms20.5 (95 aa).

The first 24 residues, 1–24, serve as a signal peptide directing secretion; it reads MPKLAVVLLVLLILPLSYFDAAGG. Positions 25-45 are excised as a propeptide; the sequence is QAAEGDRRGNGLARYLQRGGR. Glutamate 50 carries the 4-carboxyglutamate modification. A 4-hydroxyproline modification is found at proline 56. 4 disulfides stabilise this stretch: cysteine 64–cysteine 73, cysteine 69–cysteine 81, cysteine 74–cysteine 91, and cysteine 79–cysteine 93.

The protein belongs to the conotoxin D superfamily. Hetero-, homo- or pseudo-homodimer (identical sequence, different post-translational modifications). Heterodimer of [carboxy'Glu-49', hydroxy'Pro-55']Ms20.3 and [carboxyGlu-50, hydroxyPro-56]Ms20.5 may exist. Expressed by the venom duct.

The protein resides in the secreted. Functionally, alpha-conotoxins act on postsynaptic membranes, they bind to the nicotinic acetylcholine receptors (nAChR) and thus inhibit them. Through its two C-terminal domains, this homodimeric protein would bind to two nAChR allosteric sites, located outside the nAChR C-loop of the principal binding face and at the adjacent binding interface in a clockwise direction. This toxin specifically blocks mammalian neuronal nAChR of the alpha-7/CHRNA7, alpha-3-beta-2/CHRNA3-CHRNB2 and alpha-4-beta-2/CHRNA4-CHRNB2 subtypes. This Conus mustelinus (Weasel cone) protein is Alpha-conotoxin-like Ms20.5.